The primary structure comprises 487 residues: Acetylcholine receptor subunit beta-type acr-3 (487 aa).

Positions Met-1 to Cys-20 are cleaved as a signal peptide. The Extracellular segment spans residues Tyr-21–Thr-231. A glycan (N-linked (GlcNAc...) asparagine) is linked at Asn-46. Cys-151 and Cys-165 are joined by a disulfide. 3 helical membrane-spanning segments follow: residues Val-232–Pro-252, Ile-259–Ile-279, and Leu-294–Val-314. Topologically, residues Tyr-315–Arg-439 are cytoplasmic. Residues Ile-380–Ser-400 are disordered. A helical membrane pass occupies residues Leu-440–Ala-460.

It belongs to the ligand-gated ion channel (TC 1.A.9) family. Acetylcholine receptor (TC 1.A.9.1) subfamily. As to quaternary structure, component of nicotinic acetylcholine receptor. In cholinergic motoneurons, composed of 2 non-alpha subunits acr-2 and acr-3, and 3 alpha subunits unc-38, unc-63 and acr-12.

It is found in the postsynaptic cell membrane. Its subcellular location is the cell membrane. In terms of biological role, non-alpha subunit of nicotinic acetylcholine receptor (nAChR). Probably acts in cholinergic motoneurons to regulate presynaptic neurotransmitter release, thereby ensuring normal level of excitation of cholinergic motoneurons during locomotion. The sequence is that of Acetylcholine receptor subunit beta-type acr-3 (acr-3) from Caenorhabditis elegans.